A 146-amino-acid chain; its full sequence is uncharacterized protein (146 aa).

Residues 7-27 form a helical membrane-spanning segment; that stretch reads FVLSITIVLVILIIIAFIWYN.

It belongs to the asfivirus E146L family.

It is found in the host membrane. The protein resides in the virion. This is an uncharacterized protein from Ornithodoros (relapsing fever ticks).